A 321-amino-acid chain; its full sequence is MIKKIAVLTSGGDAPGMNAAIRAVVRAGLSEGLEVYGVFDGYQGLFENRIQKLSRYSVSDVINRGGTFLGSARFPEFKQPEVRSKCAEILHSHGIDALVVIGGDGSYTGAKLLTEEHGFPCIGLPGTIDNDIPGTDYTIGYQTALETAVDAIDRLRDTSGSHHRISIVEIMGRHCSDLTICAAIAGGCEYIVAPEVGFNQEELIQQIELSLANGKRHAIIAITELVTDVHKLAKDIEARVGNETRATVLGHVQRGGSPCAFDRILASRMGVYAVELLLQGHKGRCVGIQQEKLVHHDIIEAIDSMRRPFKSDYLEVSKKLF.

Gly12 contributes to the ATP binding site. Residues Arg22–Arg26 and Arg55–Asp60 each bind ADP. ATP contacts are provided by residues Arg73 to Phe74 and Gly103 to Ser106. Asp104 provides a ligand contact to Mg(2+). Thr127–Asp129 is a binding site for substrate. The active-site Proton acceptor is Asp129. Arg156 contacts ADP. Substrate contacts are provided by residues Arg164 and Met171–Arg173. Residues Gly187 to Glu189 and Lys215 to His217 contribute to the ADP site. Substrate contacts are provided by residues Glu224, Arg245, and His251–Arg254.

The protein belongs to the phosphofructokinase type A (PFKA) family. ATP-dependent PFK group I subfamily. Prokaryotic clade 'B1' sub-subfamily. As to quaternary structure, homotetramer. It depends on Mg(2+) as a cofactor.

It localises to the cytoplasm. The enzyme catalyses beta-D-fructose 6-phosphate + ATP = beta-D-fructose 1,6-bisphosphate + ADP + H(+). It functions in the pathway carbohydrate degradation; glycolysis; D-glyceraldehyde 3-phosphate and glycerone phosphate from D-glucose: step 3/4. With respect to regulation, allosterically activated by ADP and other diphosphonucleosides, and allosterically inhibited by phosphoenolpyruvate. Catalyzes the phosphorylation of D-fructose 6-phosphate to fructose 1,6-bisphosphate by ATP, the first committing step of glycolysis. The sequence is that of ATP-dependent 6-phosphofructokinase from Actinobacillus succinogenes (strain ATCC 55618 / DSM 22257 / CCUG 43843 / 130Z).